The following is a 39-amino-acid chain: Large ribosomal subunit protein bL36 (39 aa).

This sequence belongs to the bacterial ribosomal protein bL36 family.

The sequence is that of Large ribosomal subunit protein bL36 from Oenococcus oeni (strain ATCC BAA-331 / PSU-1).